The following is a 340-amino-acid chain: Methionine import ATP-binding protein MetN (340 aa).

The ABC transporter domain occupies 6 to 245; it reads IEFEGITKVF…PQTNVAKRFV (240 aa). ATP is bound at residue 42–49; it reads GYSGAGKS.

It belongs to the ABC transporter superfamily. Methionine importer (TC 3.A.1.24) family. The complex is composed of two ATP-binding proteins (MetN), two transmembrane proteins (MetI) and a solute-binding protein (MetQ).

The protein localises to the cell membrane. It catalyses the reaction L-methionine(out) + ATP + H2O = L-methionine(in) + ADP + phosphate + H(+). It carries out the reaction D-methionine(out) + ATP + H2O = D-methionine(in) + ADP + phosphate + H(+). Part of the ABC transporter complex MetNIQ involved in methionine import. Responsible for energy coupling to the transport system. This Corynebacterium diphtheriae (strain ATCC 700971 / NCTC 13129 / Biotype gravis) protein is Methionine import ATP-binding protein MetN.